Here is a 104-residue protein sequence, read N- to C-terminus: Large ribosomal subunit protein bL21 (104 aa).

This sequence belongs to the bacterial ribosomal protein bL21 family. In terms of assembly, part of the 50S ribosomal subunit. Contacts protein L20.

Functionally, this protein binds to 23S rRNA in the presence of protein L20. In Helicobacter pylori (strain Shi470), this protein is Large ribosomal subunit protein bL21.